The sequence spans 266 residues: UPF0354 protein lmo1608 (266 aa).

It belongs to the UPF0354 family.

The sequence is that of UPF0354 protein lmo1608 from Listeria monocytogenes serovar 1/2a (strain ATCC BAA-679 / EGD-e).